We begin with the raw amino-acid sequence, 448 residues long: Homogentisate 1,2-dioxygenase (448 aa).

Residue histidine 302 is the Proton acceptor of the active site. The Fe cation site is built by histidine 345 and glutamate 351. Residues tyrosine 360 and histidine 381 each coordinate homogentisate. Residue histidine 381 participates in Fe cation binding.

The protein belongs to the homogentisate dioxygenase family. In terms of assembly, hexamer; dimer of trimers. Fe cation serves as cofactor.

It carries out the reaction homogentisate + O2 = 4-maleylacetoacetate + H(+). It participates in amino-acid degradation; L-phenylalanine degradation; acetoacetate and fumarate from L-phenylalanine: step 4/6. Its function is as follows. Involved in the catabolism of homogentisate (2,5-dihydroxyphenylacetate or 2,5-OH-PhAc), a central intermediate in the degradation of phenylalanine and tyrosine. Catalyzes the oxidative ring cleavage of the aromatic ring of homogentisate to yield maleylacetoacetate. This is Homogentisate 1,2-dioxygenase from Ralstonia pickettii (strain 12J).